The sequence spans 372 residues: Glycerol-3-phosphate dehydrogenase [NAD(+)] (372 aa).

The span at 1-16 shows a compositional bias: polar residues; it reads MAPSELNCTHQNQHSS. A disordered region spans residues 1–23; it reads MAPSELNCTHQNQHSSGYDGPRS. NAD(+) contacts are provided by residues 29–34, Phe60, Phe117, Lys140, and Ala173; that span reads GSGNWG. Lys140 lines the substrate pocket. Lys225 (proton acceptor) is an active-site residue. Positions 289, 318, and 320 each coordinate NAD(+). Position 289–290 (289–290) interacts with substrate; it reads RN.

The protein belongs to the NAD-dependent glycerol-3-phosphate dehydrogenase family.

The catalysed reaction is sn-glycerol 3-phosphate + NAD(+) = dihydroxyacetone phosphate + NADH + H(+). In Cuphea lanceolata (Cigar flower), this protein is Glycerol-3-phosphate dehydrogenase [NAD(+)] (GPDH).